Here is a 148-residue protein sequence, read N- to C-terminus: Probable 4-amino-4-deoxy-L-arabinose-phosphoundecaprenol flippase subunit ArnF (148 aa).

Residues 1-23 lie on the Cytoplasmic side of the membrane; that stretch reads MRGDNTGVGKEPAVTERPAIKGY. A helical membrane pass occupies residues 24–44; the sequence is LYVLGSILLVTLAQLAMKWGV. Residues 45–63 are Periplasmic-facing; the sequence is MQLPAWQASLDIMLAHPVP. A helical transmembrane segment spans residues 64-84; sequence LLVITAGVGCYALSLLCWLAA. The Cytoplasmic portion of the chain corresponds to 85 to 91; sequence LHFTPLN. Residues 92-112 traverse the membrane as a helical segment; that stretch reads IAYPLLSTSYALVYLLAVSIP. The Periplasmic segment spans residues 113–117; sequence SFAEP. Residues 118–138 traverse the membrane as a helical segment; the sequence is LEPGKAVGVIFILLGAVLVGI. Residues 139–148 lie on the Cytoplasmic side of the membrane; that stretch reads KPVGRKRNAH.

It belongs to the ArnF family. In terms of assembly, heterodimer of ArnE and ArnF.

It is found in the cell inner membrane. It functions in the pathway bacterial outer membrane biogenesis; lipopolysaccharide biosynthesis. Translocates 4-amino-4-deoxy-L-arabinose-phosphoundecaprenol (alpha-L-Ara4N-phosphoundecaprenol) from the cytoplasmic to the periplasmic side of the inner membrane. The chain is Probable 4-amino-4-deoxy-L-arabinose-phosphoundecaprenol flippase subunit ArnF from Aeromonas salmonicida (strain A449).